The sequence spans 296 residues: Protoheme IX farnesyltransferase (296 aa).

Transmembrane regions (helical) follow at residues 8-28, 35-55, 84-104, 107-127, 132-152, 162-182, 208-228, 229-249, and 263-283; these read VTKP…FLLA, YPLF…GCVF, VSLV…YIGA, LAMW…SLYM, VYGT…GYCA, LILL…IAIF, ITVY…GGYA, GYKY…MALR, and LFVF…IDFS.

This sequence belongs to the UbiA prenyltransferase family. Protoheme IX farnesyltransferase subfamily.

It localises to the cell inner membrane. It catalyses the reaction heme b + (2E,6E)-farnesyl diphosphate + H2O = Fe(II)-heme o + diphosphate. It functions in the pathway porphyrin-containing compound metabolism; heme O biosynthesis; heme O from protoheme: step 1/1. Functionally, converts heme B (protoheme IX) to heme O by substitution of the vinyl group on carbon 2 of heme B porphyrin ring with a hydroxyethyl farnesyl side group. The chain is Protoheme IX farnesyltransferase from Serratia proteamaculans (strain 568).